The following is a 256-amino-acid chain: Leucyl/phenylalanyl-tRNA--protein transferase (256 aa).

Positions 1 to 21 are disordered; the sequence is MIPWLPDDSDSAPFPPTRLAL.

Belongs to the L/F-transferase family.

It localises to the cytoplasm. The enzyme catalyses N-terminal L-lysyl-[protein] + L-leucyl-tRNA(Leu) = N-terminal L-leucyl-L-lysyl-[protein] + tRNA(Leu) + H(+). It carries out the reaction N-terminal L-arginyl-[protein] + L-leucyl-tRNA(Leu) = N-terminal L-leucyl-L-arginyl-[protein] + tRNA(Leu) + H(+). The catalysed reaction is L-phenylalanyl-tRNA(Phe) + an N-terminal L-alpha-aminoacyl-[protein] = an N-terminal L-phenylalanyl-L-alpha-aminoacyl-[protein] + tRNA(Phe). Functionally, functions in the N-end rule pathway of protein degradation where it conjugates Leu, Phe and, less efficiently, Met from aminoacyl-tRNAs to the N-termini of proteins containing an N-terminal arginine or lysine. In Leptothrix cholodnii (strain ATCC 51168 / LMG 8142 / SP-6) (Leptothrix discophora (strain SP-6)), this protein is Leucyl/phenylalanyl-tRNA--protein transferase.